A 1070-amino-acid polypeptide reads, in one-letter code: DNA-directed RNA polymerase subunit beta (1070 aa).

Belongs to the RNA polymerase beta chain family. As to quaternary structure, in plastids the minimal PEP RNA polymerase catalytic core is composed of four subunits: alpha, beta, beta', and beta''. When a (nuclear-encoded) sigma factor is associated with the core the holoenzyme is formed, which can initiate transcription.

The protein resides in the plastid. It is found in the chloroplast. It carries out the reaction RNA(n) + a ribonucleoside 5'-triphosphate = RNA(n+1) + diphosphate. Its function is as follows. DNA-dependent RNA polymerase catalyzes the transcription of DNA into RNA using the four ribonucleoside triphosphates as substrates. This Lotus japonicus (Lotus corniculatus var. japonicus) protein is DNA-directed RNA polymerase subunit beta.